A 256-amino-acid polypeptide reads, in one-letter code: Small ribosomal subunit protein uS2 (256 aa).

Belongs to the universal ribosomal protein uS2 family.

The polypeptide is Small ribosomal subunit protein uS2 (Brucella melitensis biotype 1 (strain ATCC 23456 / CCUG 17765 / NCTC 10094 / 16M)).